Here is a 72-residue protein sequence, read N- to C-terminus: Crustacean hyperglycemic hormone (72 aa).

Gln1 bears the Pyrrolidone carboxylic acid mark. A D-phenylalanine modification is found at Phe3. 3 disulfides stabilise this stretch: Cys7–Cys43, Cys23–Cys39, and Cys26–Cys52. Val72 carries the valine amide modification.

In terms of tissue distribution, produced by the medulla terminalis X-organ in the eyestalks and transported to the sinus gland where they are stored and released.

It localises to the secreted. Functionally, hormone found in the sinus gland of isopods and decapods which controls the blood sugar level. Has a secretagogue action over the amylase released from the midgut gland. May act as a stress hormone and may be involved in the control of molting and reproduction. The chain is Crustacean hyperglycemic hormone from Astacus astacus (Noble crayfish).